We begin with the raw amino-acid sequence, 122 residues long: Large ribosomal subunit protein uL14 (122 aa).

It belongs to the universal ribosomal protein uL14 family. In terms of assembly, part of the 50S ribosomal subunit. Forms a cluster with proteins L3 and L19. In the 70S ribosome, L14 and L19 interact and together make contacts with the 16S rRNA in bridges B5 and B8.

Its function is as follows. Binds to 23S rRNA. Forms part of two intersubunit bridges in the 70S ribosome. The polypeptide is Large ribosomal subunit protein uL14 (Laribacter hongkongensis (strain HLHK9)).